The sequence spans 159 residues: 3-hydroxyacyl-[acyl-carrier-protein] dehydratase FabZ (159 aa).

His58 is a catalytic residue.

This sequence belongs to the thioester dehydratase family. FabZ subfamily.

The protein resides in the cytoplasm. It catalyses the reaction a (3R)-hydroxyacyl-[ACP] = a (2E)-enoyl-[ACP] + H2O. Its function is as follows. Involved in unsaturated fatty acids biosynthesis. Catalyzes the dehydration of short chain beta-hydroxyacyl-ACPs and long chain saturated and unsaturated beta-hydroxyacyl-ACPs. This is 3-hydroxyacyl-[acyl-carrier-protein] dehydratase FabZ from Helicobacter pylori (strain HPAG1).